Consider the following 355-residue polypeptide: MRFSDNLAKILDKYENLGNKLSSGIMGDEFVKASKEYAELEDVVAKIKEYNKAKSELEEANNFKLEVGLDNATLEMIEDEIYTLENSLPKLERAVKIALLPKDDADSKSAIIEVRAGSGGEEAALFAAVLFNMYQRYAELKGWRFEILAISDTGIGGYKEASASIKGKDVFSKLKFESGVHRVQRVPETESQGRIHTSAATVAVLPEAEEVDIKIEDKDLRIDTYRASGAGGQHVNTTDSAVRITHIPTGITVALQDEKSQHKNKAKALKILRARIYEEERRKKEQERADSRRGQVGSGNRSERIRTYNFPQGRVSDHRINLTLYKIDEVVKNGQLDEFVEALIADDEAKKLLEI.

At Gln233 the chain carries N5-methylglutamine. A compositionally biased stretch (basic and acidic residues) spans 280–293 (ERRKKEQERADSRR). The interval 280-306 (ERRKKEQERADSRRGQVGSGNRSERIR) is disordered.

Belongs to the prokaryotic/mitochondrial release factor family. Post-translationally, methylated by PrmC. Methylation increases the termination efficiency of RF1.

The protein resides in the cytoplasm. Functionally, peptide chain release factor 1 directs the termination of translation in response to the peptide chain termination codons UAG and UAA. In Rickettsia africae (strain ESF-5), this protein is Peptide chain release factor 1.